The sequence spans 187 residues: Chromophore lyase CpcS/CpeS 2 (187 aa).

This sequence belongs to the CpcS/CpeS biliprotein lyase family.

Its function is as follows. Covalently attaches a chromophore to Cys residue(s) of phycobiliproteins. This is Chromophore lyase CpcS/CpeS 2 from Synechococcus sp. (strain JA-3-3Ab) (Cyanobacteria bacterium Yellowstone A-Prime).